The following is a 446-amino-acid chain: tRNA modification GTPase MnmE (446 aa).

Residues R23, E81, and K120 each contribute to the (6S)-5-formyl-5,6,7,8-tetrahydrofolate site. The TrmE-type G domain occupies 216–370 (GFKVAIIGKP…LIKELELILD (155 aa)). K(+) is bound at residue N226. GTP contacts are provided by residues 226-231 (NVGKSS), 245-251 (SDIAGTT), and 270-273 (DTAG). Residue S230 coordinates Mg(2+). Residues S245, I247, and T250 each contribute to the K(+) site. T251 contributes to the Mg(2+) binding site. K446 is a (6S)-5-formyl-5,6,7,8-tetrahydrofolate binding site.

This sequence belongs to the TRAFAC class TrmE-Era-EngA-EngB-Septin-like GTPase superfamily. TrmE GTPase family. As to quaternary structure, homodimer. Heterotetramer of two MnmE and two MnmG subunits. It depends on K(+) as a cofactor.

It localises to the cytoplasm. Its function is as follows. Exhibits a very high intrinsic GTPase hydrolysis rate. Involved in the addition of a carboxymethylaminomethyl (cmnm) group at the wobble position (U34) of certain tRNAs, forming tRNA-cmnm(5)s(2)U34. In Aliarcobacter butzleri (strain RM4018) (Arcobacter butzleri), this protein is tRNA modification GTPase MnmE.